The following is a 315-amino-acid chain: Ribosomal RNA small subunit methyltransferase H (315 aa).

Residues 37 to 39 (AGH), Asp-57, Tyr-84, Asp-105, and Gln-112 each bind S-adenosyl-L-methionine.

The protein belongs to the methyltransferase superfamily. RsmH family.

The protein localises to the cytoplasm. The catalysed reaction is cytidine(1402) in 16S rRNA + S-adenosyl-L-methionine = N(4)-methylcytidine(1402) in 16S rRNA + S-adenosyl-L-homocysteine + H(+). Specifically methylates the N4 position of cytidine in position 1402 (C1402) of 16S rRNA. This Lachnospira eligens (strain ATCC 27750 / DSM 3376 / VPI C15-48 / C15-B4) (Eubacterium eligens) protein is Ribosomal RNA small subunit methyltransferase H.